We begin with the raw amino-acid sequence, 441 residues long: Xaa-Pro aminopeptidase (441 aa).

Residues Asp261, Asp272, His355, Glu384, and Glu407 each coordinate Mn(2+).

Belongs to the peptidase M24B family. Homotetramer. Requires Mn(2+) as cofactor.

It localises to the cytoplasm. It catalyses the reaction Release of any N-terminal amino acid, including proline, that is linked to proline, even from a dipeptide or tripeptide.. The polypeptide is Xaa-Pro aminopeptidase (pepP) (Escherichia coli (strain K12)).